The sequence spans 314 residues: L-lactate dehydrogenase 2 (314 aa).

Residues Val16, Asp37, Lys42, Tyr68, and 82–83 each bind NAD(+); that span reads GV. Substrate-binding residues include Gln85 and Arg91. Residues Ser104, 121–123, and Thr146 contribute to the NAD(+) site; that span reads ASN. 123-126 serves as a coordination point for substrate; the sequence is NPVD. 151-154 serves as a coordination point for substrate; that stretch reads DTTR. Beta-D-fructose 1,6-bisphosphate contacts are provided by Arg156 and His171. The Proton acceptor role is filled by His178. Tyr223 is subject to Phosphotyrosine. Residue Thr232 participates in substrate binding.

Belongs to the LDH/MDH superfamily. LDH family. In terms of assembly, homotetramer.

The protein localises to the cytoplasm. The catalysed reaction is (S)-lactate + NAD(+) = pyruvate + NADH + H(+). It participates in fermentation; pyruvate fermentation to lactate; (S)-lactate from pyruvate: step 1/1. With respect to regulation, allosterically activated by fructose 1,6-bisphosphate (FBP). In terms of biological role, catalyzes the conversion of lactate to pyruvate. The polypeptide is L-lactate dehydrogenase 2 (Lactococcus lactis subsp. lactis (strain IL1403) (Streptococcus lactis)).